The primary structure comprises 554 residues: CTP synthase (554 aa).

Residues 1 to 265 (MTPLIFVTGG…DEIVIDQFKL (265 aa)) are amidoligase domain. Ser-13 is a binding site for CTP. Residue Ser-13 participates in UTP binding. Residues 14–19 (SLGKGI) and Asp-71 each bind ATP. Mg(2+) contacts are provided by Asp-71 and Glu-139. CTP is bound by residues 146-148 (DIE), 186-191 (KTKPTQ), and Lys-222. UTP contacts are provided by residues 186–191 (KTKPTQ) and Lys-222. Residues 292 to 545 (TIAVVGKYVD…VKASRARKAG (254 aa)) enclose the Glutamine amidotransferase type-1 domain. Gly-353 provides a ligand contact to L-glutamine. The Nucleophile; for glutamine hydrolysis role is filled by Cys-380. L-glutamine is bound by residues 381-384 (YGMQ), Glu-404, and Arg-471. Residues His-518 and Glu-520 contribute to the active site.

This sequence belongs to the CTP synthase family. As to quaternary structure, homotetramer.

It catalyses the reaction UTP + L-glutamine + ATP + H2O = CTP + L-glutamate + ADP + phosphate + 2 H(+). The catalysed reaction is L-glutamine + H2O = L-glutamate + NH4(+). The enzyme catalyses UTP + NH4(+) + ATP = CTP + ADP + phosphate + 2 H(+). It participates in pyrimidine metabolism; CTP biosynthesis via de novo pathway; CTP from UDP: step 2/2. Its activity is regulated as follows. Allosterically activated by GTP, when glutamine is the substrate; GTP has no effect on the reaction when ammonia is the substrate. The allosteric effector GTP functions by stabilizing the protein conformation that binds the tetrahedral intermediate(s) formed during glutamine hydrolysis. Inhibited by the product CTP, via allosteric rather than competitive inhibition. Its function is as follows. Catalyzes the ATP-dependent amination of UTP to CTP with either L-glutamine or ammonia as the source of nitrogen. Regulates intracellular CTP levels through interactions with the four ribonucleotide triphosphates. In Xylella fastidiosa (strain M23), this protein is CTP synthase.